The primary structure comprises 757 residues: Ecdysone receptor (757 aa).

A modulating region spans residues 1 to 300; that stretch reads MMKRRWSNNG…GPAPRLQEEL (300 aa). 2 disordered regions span residues 126–192 and 235–289; these read NSVG…GGGG and LNHH…KKIK. Residues 128–138 show a composition bias toward gly residues; the sequence is VGGGGGGGGVP. The segment covering 167 to 183 has biased composition (low complexity); the sequence is NSNSNHSNSSSHHTNGH. 2 NR C4-type zinc fingers span residues 301–321 and 337–361; these read CLVCGDRASGYHYNALTCEGC and CKFGHACEMDMYMRRKCQECRLKKC. Residues 301 to 373 constitute a DNA-binding region (nuclear receptor); sequence CLVCGDRASG…VGMRPECVVP (73 aa). Residues 442-677 form the NR LBD domain; sequence NQLAVIYKLI…FLEEIWDVHA (236 aa). The span at 717 to 734 shows a compositional bias: low complexity; it reads TSMATSSSSSLSPSAAST. The segment at 717-739 is disordered; that stretch reads TSMATSSSSSLSPSAASTPNGGA.

It belongs to the nuclear hormone receptor family. NR1 subfamily.

The protein localises to the nucleus. Functionally, receptor for ecdysone. Binds to ecdysone response elements (ECRES). In Lucilia cuprina (Green bottle fly), this protein is Ecdysone receptor (EcR).